The following is a 302-amino-acid chain: Urease accessory protein UreD (302 aa).

It belongs to the UreD family. In terms of assembly, ureD, UreF and UreG form a complex that acts as a GTP-hydrolysis-dependent molecular chaperone, activating the urease apoprotein by helping to assemble the nickel containing metallocenter of UreC. The UreE protein probably delivers the nickel.

It localises to the cytoplasm. Its function is as follows. Required for maturation of urease via the functional incorporation of the urease nickel metallocenter. The protein is Urease accessory protein UreD of Pseudoalteromonas translucida (strain TAC 125).